The chain runs to 732 residues: Anthranilate synthase (732 aa).

The Glutamine amidotransferase type-1 domain maps to 533 to 728 (RVLLVDHDDS…MDRLAAGALT (196 aa)). 583–585 (GPG) serves as a coordination point for L-glutamine. Cys-610 serves as the catalytic Nucleophile; for GATase activity. L-glutamine-binding positions include Gln-614 and 660 to 661 (SL). Active-site for GATase activity residues include His-699 and Glu-701.

It catalyses the reaction chorismate + L-glutamine = anthranilate + pyruvate + L-glutamate + H(+). It participates in amino-acid biosynthesis; L-tryptophan biosynthesis; L-tryptophan from chorismate: step 1/5. This is Anthranilate synthase (trpE(G)) from Azospirillum brasilense.